The sequence spans 745 residues: Prolyl oligopeptidase ophP (745 aa).

Active-site charge relay system residues include Ser580, Asp665, and His701.

The protein belongs to the peptidase S9A family. In terms of assembly, monomer.

The enzyme catalyses Hydrolysis of Pro-|-Xaa &gt;&gt; Ala-|-Xaa in oligopeptides.. It participates in mycotoxin biosynthesis. Prolyl oligopeptidase; part of the gene cluster that mediates the biosynthesis of omphalotin A, a highly methylated cyclic dodecapeptide with nematodicidal activity. Excises and catalyzes the macrocyclization of the methylated core peptide of OphMA to yield omphalotin A. OphP works in a two-step fashion with an initial cleavage at the N-terminus, followed by a second cleavage at the C-terminus of the core peptide. According to this mechanism, the free N-terminus of the core peptide, generated by the first cleavage, attacks the covalent intermediate of the second cleavage, which results in macrocyclization of the core peptide. The chain is Prolyl oligopeptidase ophP from Omphalotus olearius (Jack o'lantern).